Consider the following 680-residue polypeptide: uncharacterized protein (680 aa).

It belongs to the HyuA family.

This is an uncharacterized protein from Methanocaldococcus jannaschii (strain ATCC 43067 / DSM 2661 / JAL-1 / JCM 10045 / NBRC 100440) (Methanococcus jannaschii).